The primary structure comprises 98 residues: MRSLTLAAVLACSLLLVFHTSAAEELEVQDGHLMNPGDGDTALATVDDERIIECFFSCEIEKDGKSKEGKPCKPKGDKNKDKKCSGGWRCKIKMCLKI.

The N-terminal stretch at 1 to 23 (MRSLTLAAVLACSLLLVFHTSAA) is a signal peptide. Residues 24–50 (EELEVQDGHLMNPGDGDTALATVDDER) constitute a propeptide that is removed on maturation. 3 cysteine pairs are disulfide-bonded: cysteine 54/cysteine 84, cysteine 58/cysteine 90, and cysteine 72/cysteine 95. The disordered stretch occupies residues 63–84 (DGKSKEGKPCKPKGDKNKDKKC).

Belongs to the neurotoxin 12 (Hwtx-2) family. 01 (Ap1a) subfamily. In terms of tissue distribution, expressed by the venom gland.

It localises to the secreted. Is toxic to both insects and mammals. Induces reversible paralysis when injected into S.frugiperda larvae. Reduces both the amplitude and frequency of responses from muscle (GF-TTM and GF-DLM) pathways in the D.melanogaster giant fiber circuit, suggesting an action at the neuromuscular junction, which is mediated by glutamatergic receptors. In mice, intracranial injection of 30 ug causes increased urination, myoclonus, hypermotility with circular movements followed by respiratory and generalized seizures resulting in death within 25-35 minutes of injection. This chain is U1-theraphotoxin-Ap1a, found in Acanthoscurria paulensis (Brazilian giant black tarantula spider).